The primary structure comprises 1702 residues: Dicer-like protein 4 (1702 aa).

2 disordered regions span residues M1–T52 and S89–P120. Basic and acidic residues predominate over residues G17–N31. Low complexity predominate over residues S89–S105. Positions L131–S307 constitute a Helicase ATP-binding domain. L144 to T151 contacts ATP. Residues D251–H254 carry the DECH box motif. Residues Q475–S629 enclose the Helicase C-terminal domain. One can recognise a Dicer dsRNA-binding fold domain in the interval S656–D748. The PAZ domain occupies L932–I1054. RNase III domains follow at residues E1083–G1251 and L1292–G1436. 3 residues coordinate Mg(2+): E1330, D1422, and E1425. 2 DRBM domains span residues S1462 to A1528 and T1621 to H1697.

The protein belongs to the helicase family. Dicer subfamily. Interacts with DRB4. Mg(2+) serves as cofactor. It depends on Mn(2+) as a cofactor.

The protein resides in the nucleus. Ribonuclease (RNase) III involved in RNA-mediated post-transcriptional gene silencing (PTGS). Functions in the biogenesis of trans-acting small interfering RNAs (ta-siRNAs, derived from the TAS1, TAS2 or TAS3 endogenous transcripts) by cleaving small dsRNAs into 21-24 nucleotide ta-siRNAs. Functions with the dsRNA-binding protein DRB4 in ta-siRNAs processing. Acts in the RDR6/SGS3/DCL4/AGO7 ta-siRNA pathway involved in leaf developmental timing. Plays a role in transitive silencing of transgenes by processing secondary siRNAs. This pathway, which requires DCL2 and RDR6, amplifies silencing by using the target RNA as substrate to generate secondary siRNAs, providing an efficient mechanism for long-distance silencing. Required for the production of the 30-40 nucleotide bacterial-induced long siRNAs (lsiRNA). May participate with DCL3 in the production of 24 nucleotide repeat-associated siRNAs (ra-siRNAs) which derive from heterochromatin and DNA repeats such as transposons. Plays an important role in antiviral RNA silencing. Involved in the production of viral siRNAs derived from the cucumber mosaic virus (CMV), turnip crinkle virus (TCV) and tobacco rattle virus (TRV). Targeted by the viral silencing suppressor (VSR) protein 2b of the cucumber mosaic virus (CMV) that inactivates DCL4 function in RNA silencing. Does not seem to be involved in microRNAs (miRNAs) processing. This Arabidopsis thaliana (Mouse-ear cress) protein is Dicer-like protein 4 (DCL4).